Here is a 144-residue protein sequence, read N- to C-terminus: Large ribosomal subunit protein uL15 (144 aa).

Residues 1–52 (MRLNTLSPAAGSKPSKKRVGRGIGSGLGKTGGRGHKGQKSRSGGKVRAGFEG) form a disordered region. Gly residues predominate over residues 21-31 (RGIGSGLGKTG). A compositionally biased stretch (basic residues) spans 32-44 (GRGHKGQKSRSGG).

It belongs to the universal ribosomal protein uL15 family. As to quaternary structure, part of the 50S ribosomal subunit.

Binds to the 23S rRNA. In Aliivibrio fischeri (strain ATCC 700601 / ES114) (Vibrio fischeri), this protein is Large ribosomal subunit protein uL15.